A 271-amino-acid polypeptide reads, in one-letter code: Phosphatidylinositol transfer protein alpha isoform (271 aa).

6 residues coordinate a 1,2-diacyl-sn-glycero-3-phospho-(1D-myo-inositol): threonine 59, lysine 61, glutamate 86, asparagine 90, threonine 97, and lysine 195. At lysine 216 the chain carries N6-acetyllysine. The span at 251–264 (TKRQLDEMRQKDPV) shows a compositional bias: basic and acidic residues. Residues 251–271 (TKRQLDEMRQKDPVKGMTADD) form a disordered region.

This sequence belongs to the PtdIns transfer protein family. PI transfer class I subfamily. Phosphorylated by PKC in a calcium and phosphatidylserine-dependent manner. Expressed in a wide range of tissues.

Its subcellular location is the cytoplasm. The protein resides in the nucleus. The enzyme catalyses a 1,2-diacyl-sn-glycero-3-phosphocholine(in) = a 1,2-diacyl-sn-glycero-3-phosphocholine(out). It catalyses the reaction a 1,2-diacyl-sn-glycero-3-phospho-(1D-myo-inositol)(in) = a 1,2-diacyl-sn-glycero-3-phospho-(1D-myo-inositol)(out). Its activity is regulated as follows. Phosphatidylinositol transfer activity is inhibited by N-ethylmaleimide. Functionally, catalyzes the transfer of phosphatidylinositol (PI) and phosphatidylcholine (PC) between membranes. Shows a preference for PI and PC containing shorter saturated or monosaturated acyl chains at the sn-1 and sn-2 positions. Preference order for PC is C16:1 &gt; C16:0 &gt; C18:1 &gt; C18:0 &gt; C20:4 and for PI is C16:1 &gt; C16:0 &gt; C18:1 &gt; C18:0 &gt; C20:4 &gt; C20:3. The polypeptide is Phosphatidylinositol transfer protein alpha isoform (Pitpna) (Rattus norvegicus (Rat)).